The primary structure comprises 309 residues: Hydroxyacylglutathione hydrolase, mitochondrial (309 aa).

The transit peptide at 1–24 directs the protein to the mitochondrion; it reads MVLGRGSLCLRSLSVLGAACARRG. An N6-acetyllysine modification is found at Lys-90. Zn(2+)-binding residues include His-103, His-105, Asp-107, and His-108. Lys-117 is modified (N6-acetyllysine). Zn(2+) is bound by residues His-159 and Asp-183. Residues 192-194 and 222-224 each bind substrate; these read KFY and HEY. Residue His-222 coordinates Zn(2+). An N6-acetyllysine; alternate modification is found at Lys-230. The residue at position 230 (Lys-230) is an N6-succinyllysine; alternate. 298 to 301 lines the substrate pocket; it reads RREK.

It belongs to the metallo-beta-lactamase superfamily. Glyoxalase II family. As to quaternary structure, monomer. Zn(2+) is required as a cofactor. As to expression, strongly expressed in testis, skeletal muscle and heart. Weakly expressed in placenta, pancreas, spleen and peripheral blood leukocytes.

The protein localises to the mitochondrion matrix. Its subcellular location is the cytoplasm. The catalysed reaction is an S-(2-hydroxyacyl)glutathione + H2O = a 2-hydroxy carboxylate + glutathione + H(+). It catalyses the reaction (R)-S-lactoylglutathione + H2O = (R)-lactate + glutathione + H(+). The protein operates within secondary metabolite metabolism; methylglyoxal degradation; (R)-lactate from methylglyoxal: step 2/2. Thiolesterase that catalyzes the hydrolysis of S-D-lactoyl-glutathione to form glutathione and D-lactic acid. In Rattus norvegicus (Rat), this protein is Hydroxyacylglutathione hydrolase, mitochondrial (Hagh).